The following is a 311-amino-acid chain: Homoserine O-acetyltransferase (311 aa).

The active-site Acyl-thioester intermediate is the C142. Positions 163 and 192 each coordinate substrate. The active-site Proton acceptor is the H235. The active site involves E237. R249 provides a ligand contact to substrate.

It belongs to the MetA family.

It localises to the cytoplasm. It catalyses the reaction L-homoserine + acetyl-CoA = O-acetyl-L-homoserine + CoA. The protein operates within amino-acid biosynthesis; L-methionine biosynthesis via de novo pathway; O-acetyl-L-homoserine from L-homoserine: step 1/1. Its function is as follows. Transfers an acetyl group from acetyl-CoA to L-homoserine, forming acetyl-L-homoserine. This Lysinibacillus sphaericus (strain C3-41) protein is Homoserine O-acetyltransferase.